A 611-amino-acid polypeptide reads, in one-letter code: Polyphenol oxidase 4 (611 aa).

Positions 57, 82, 91, 251, 255, and 283 each coordinate Cu cation. Residues 80–82 constitute a cross-link (2'-(S-cysteinyl)-histidine (Cys-His)); that stretch reads CTH. H255 contributes to the substrate binding site. Positions 380-611 are cleaved as a propeptide — removed in mature form; the sequence is IKKSEGGKNP…GGLGALGRIF (232 aa).

The protein belongs to the tyrosinase family. In terms of assembly, heterotetramer. Cu(2+) is required as a cofactor. The C-ter is probably cleaved after Gly-379 since the mature active protein is smaller than the protein encoded by the gene.

The catalysed reaction is 2 L-dopa + O2 = 2 L-dopaquinone + 2 H2O. It carries out the reaction L-tyrosine + O2 = L-dopaquinone + H2O. Its function is as follows. Copper-containing oxidase that catalyzes both the o-hydroxylation of monophenols and the subsequent oxidation of the resulting o-diphenols into reactive o-quinones, which evolve spontaneously to produce intermediates, which associate in dark brown pigments. Involved in the initial step of melanin synthesis. Melanins constitute a mechanism of defense and resistance to stress such as UV radiations, free radicals, gamma rays, dehydratation and extreme temperatures, and contribute to the fungal cell-wall resistance against hydrolytic enzymes in avoiding cellular lysis. Fungal pigments are also involved in the formation and stability of spores. The sequence is that of Polyphenol oxidase 4 (PPO4) from Agaricus bisporus (White button mushroom).